The sequence spans 254 residues: Ribonuclease HII (254 aa).

Residues 70 to 254 form the RNase H type-2 domain; the sequence is QAIAGIDEVG…TFEPIKSMYE (185 aa). A divalent metal cation-binding residues include D76, E77, and D168.

It belongs to the RNase HII family. Mn(2+) is required as a cofactor. Mg(2+) serves as cofactor.

The protein resides in the cytoplasm. The enzyme catalyses Endonucleolytic cleavage to 5'-phosphomonoester.. Endonuclease that specifically degrades the RNA of RNA-DNA hybrids. This Streptococcus sanguinis (strain SK36) protein is Ribonuclease HII.